Reading from the N-terminus, the 272-residue chain is MSEMEVMASIMRDHIIELLREGKRIDGRSFEDYRDLEIKVNVIEKAEGSAWVRLGDTQVLVGIKAELGEPFPDLPDRGVITTNVELVPLASPTFEPGPPDENAIELARVVDRGIRESQAVDLEKLVIVPGKLVRVIFIDVHVLDHGGNLLDASGIGAIAALLSTKLPKVNYNEETGEVEILDEYEPLPVNHVPIPVTFAKIGNSIVVDPSLDEERVMDGRLTITTDETGHISAAQKGEAGAFKMEEVMYALEVALKKGNEIREKVLKAVGRA.

This sequence belongs to the RNase PH family. Rrp42 subfamily. As to quaternary structure, component of the archaeal exosome complex. Forms a hexameric ring-like arrangement composed of 3 Rrp41-Rrp42 heterodimers. The hexameric ring associates with a trimer of Rrp4 and/or Csl4 subunits.

It localises to the cytoplasm. Functionally, non-catalytic component of the exosome, which is a complex involved in RNA degradation. Contributes to the structuring of the Rrp41 active site. The protein is Exosome complex component Rrp42 of Thermococcus kodakarensis (strain ATCC BAA-918 / JCM 12380 / KOD1) (Pyrococcus kodakaraensis (strain KOD1)).